A 194-amino-acid chain; its full sequence is Imidazoleglycerol-phosphate dehydratase (194 aa).

This sequence belongs to the imidazoleglycerol-phosphate dehydratase family.

The protein localises to the cytoplasm. The enzyme catalyses D-erythro-1-(imidazol-4-yl)glycerol 3-phosphate = 3-(imidazol-4-yl)-2-oxopropyl phosphate + H2O. The protein operates within amino-acid biosynthesis; L-histidine biosynthesis; L-histidine from 5-phospho-alpha-D-ribose 1-diphosphate: step 6/9. The chain is Imidazoleglycerol-phosphate dehydratase from Streptococcus mutans serotype c (strain ATCC 700610 / UA159).